Reading from the N-terminus, the 523-residue chain is GMP synthase [glutamine-hydrolyzing] (523 aa).

Residues 8–205 enclose the Glutamine amidotransferase type-1 domain; the sequence is KILILDFGSQ…VVNICGCTTN (198 aa). Residue Cys-85 is the Nucleophile of the active site. Residues His-179 and Glu-181 contribute to the active site. Positions 206–398 constitute a GMPS ATP-PPase domain; the sequence is WTPENIIEDA…LGLPAEMLNR (193 aa). 233–239 lines the ATP pocket; the sequence is SGGVDSS.

As to quaternary structure, homodimer.

It catalyses the reaction XMP + L-glutamine + ATP + H2O = GMP + L-glutamate + AMP + diphosphate + 2 H(+). Its pathway is purine metabolism; GMP biosynthesis; GMP from XMP (L-Gln route): step 1/1. Catalyzes the synthesis of GMP from XMP. In Mannheimia succiniciproducens (strain KCTC 0769BP / MBEL55E), this protein is GMP synthase [glutamine-hydrolyzing].